Consider the following 476-residue polypeptide: Lactate utilization protein B (476 aa).

4Fe-4S ferredoxin-type domains lie at 304-334 (GGEFQPILQCIRCAACVNACPVYRHVGGHTY) and 353-382 (YDDFKELPYASTLCGACTDACPVKIPLHQL). Positions 313, 316, 319, 323, 366, 369, and 373 each coordinate [4Fe-4S] cluster. Residues 452–476 (RDFPAPNKNSFRNWMKHRTKGDEES) are disordered.

This sequence belongs to the LutB/YkgF family.

Is involved in L-lactate degradation and allows cells to grow with lactate as the sole carbon source. Has probably a role as an electron transporter during oxidation of L-lactate. The sequence is that of Lactate utilization protein B from Lysinibacillus sphaericus (strain C3-41).